We begin with the raw amino-acid sequence, 328 residues long: Protein chibby homolog 2 (328 aa).

Positions 180-231 (NKGASSVQKDTENTTAAGEGSLGPTCQEEHDAKEESTTPTQNDTKIAPSTED) are disordered. The segment covering 182 to 195 (GASSVQKDTENTTA) has biased composition (polar residues). Over residues 206-215 (QEEHDAKEES) the composition is skewed to basic and acidic residues. Residues 259-307 (RESLHALQDESKFFQEEYKKLKLQLNNVKNTVSDITTQMEMLEKELIAI) adopt a coiled-coil conformation.

Belongs to the chibby family. SPERT subfamily.

This Gallus gallus (Chicken) protein is Protein chibby homolog 2 (CBY2).